The chain runs to 143 residues: Large ribosomal subunit protein uL11 (143 aa).

Belongs to the universal ribosomal protein uL11 family. Part of the ribosomal stalk of the 50S ribosomal subunit. Interacts with L10 and the large rRNA to form the base of the stalk. L10 forms an elongated spine to which L12 dimers bind in a sequential fashion forming a multimeric L10(L12)X complex. One or more lysine residues are methylated.

In terms of biological role, forms part of the ribosomal stalk which helps the ribosome interact with GTP-bound translation factors. The sequence is that of Large ribosomal subunit protein uL11 from Pseudomonas entomophila (strain L48).